Reading from the N-terminus, the 425-residue chain is Serine hydroxymethyltransferase (425 aa).

Residues Leu-128 and 132-134 (GHL) contribute to the (6S)-5,6,7,8-tetrahydrofolate site. Position 237 is an N6-(pyridoxal phosphate)lysine (Lys-237).

The protein belongs to the SHMT family. In terms of assembly, homodimer. Pyridoxal 5'-phosphate is required as a cofactor.

The protein resides in the cytoplasm. The enzyme catalyses (6R)-5,10-methylene-5,6,7,8-tetrahydrofolate + glycine + H2O = (6S)-5,6,7,8-tetrahydrofolate + L-serine. It functions in the pathway one-carbon metabolism; tetrahydrofolate interconversion. The protein operates within amino-acid biosynthesis; glycine biosynthesis; glycine from L-serine: step 1/1. In terms of biological role, catalyzes the reversible interconversion of serine and glycine with tetrahydrofolate (THF) serving as the one-carbon carrier. This reaction serves as the major source of one-carbon groups required for the biosynthesis of purines, thymidylate, methionine, and other important biomolecules. Also exhibits THF-independent aldolase activity toward beta-hydroxyamino acids, producing glycine and aldehydes, via a retro-aldol mechanism. The polypeptide is Serine hydroxymethyltransferase (Wolbachia sp. subsp. Drosophila simulans (strain wRi)).